The sequence spans 349 residues: NADH-ubiquinone oxidoreductase chain 2 (349 aa).

10 consecutive transmembrane segments (helical) span residues 3-23, 25-45, 66-86, 98-118, 149-171, 178-197, 202-219, 240-260, 274-294, and 319-339; these read PYVL…TFAS, HWLL…PIMA, AAAM…EWEI, VMLA…LPEV, INSS…GGLN, ILAY…LQYA, LLSL…FLTL, LAAL…LSGF, GLPL…YFYL, and FTLI…LLPL.

This sequence belongs to the complex I subunit 2 family.

Its subcellular location is the mitochondrion inner membrane. It carries out the reaction a ubiquinone + NADH + 5 H(+)(in) = a ubiquinol + NAD(+) + 4 H(+)(out). Functionally, core subunit of the mitochondrial membrane respiratory chain NADH dehydrogenase (Complex I) that is believed to belong to the minimal assembly required for catalysis. Complex I functions in the transfer of electrons from NADH to the respiratory chain. The immediate electron acceptor for the enzyme is believed to be ubiquinone. The protein is NADH-ubiquinone oxidoreductase chain 2 (MT-ND2) of Salmo salar (Atlantic salmon).